The following is a 189-amino-acid chain: Interferon alpha-G (189 aa).

The N-terminal stretch at 1-23 (MAPAWSLLLALLLLSCNAICSLG) is a signal peptide. 2 cysteine pairs are disulfide-bonded: C24–C122 and C52–C162.

This sequence belongs to the alpha/beta interferon family.

It is found in the secreted. Produced by macrophages, IFN-alpha have antiviral activities. Interferon stimulates the production of two enzymes: a protein kinase and an oligoadenylate synthetase. This is Interferon alpha-G (IFNAG) from Bos taurus (Bovine).